The primary structure comprises 252 residues: 5-oxoprolinase subunit A (252 aa).

The protein belongs to the LamB/PxpA family. In terms of assembly, forms a complex composed of PxpA, PxpB and PxpC.

The catalysed reaction is 5-oxo-L-proline + ATP + 2 H2O = L-glutamate + ADP + phosphate + H(+). Catalyzes the cleavage of 5-oxoproline to form L-glutamate coupled to the hydrolysis of ATP to ADP and inorganic phosphate. The protein is 5-oxoprolinase subunit A of Kocuria rhizophila (strain ATCC 9341 / DSM 348 / NBRC 103217 / DC2201).